The following is a 696-amino-acid chain: Junctophilin-2 (696 aa).

The Cytoplasmic portion of the chain corresponds to 1-674 (MSGGRFDFDD…EVEVEEVPNT (674 aa)). 6 MORN repeats span residues 14 to 36 (YCGG…KGQG), 38 to 59 (YSGS…SGNT), 60 to 79 (FEGY…TKGR), 82 to 104 (YKGE…NSGA), 106 to 128 (YEGT…DGGT), and 129 to 151 (YQGQ…PYGM). Residues serine 162 and serine 165 each carry the phosphoserine modification. Disordered stretches follow at residues 164–192 (SSLR…SPPV) and 246–273 (LSSG…AAPF). MORN repeat units follow at residues 285–307 (YMGE…SGLR) and 308–330 (YEGE…DGHR). The short motif at 345-359 (KRRVLPLKSSKVRQK) is the Bipartite nuclear localization signal element. Positions 439–664 (NSESLLEPPE…RKEVAQAKEA (226 aa)) are disordered. A phosphoserine mark is found at serine 440, serine 442, and serine 462. Basic and acidic residues predominate over residues 457 to 471 (ERPRESPQLHERETP). Phosphothreonine is present on threonine 470. Pro residues predominate over residues 474–487 (EGGPPSPAGTPPQP). Serine 479 carries the post-translational modification Phosphoserine. Threonine 483 is modified (phosphothreonine). Residues 488 to 492 (KRPRP) carry the Nuclear localization signal motif. A phosphoserine mark is found at serine 527 and serine 533. The segment covering 573–585 (PLEDEQEPEPEPE) has biased composition (acidic residues). A phosphoserine mark is found at serine 593, serine 597, and serine 613. The segment covering 631-644 (AEPKAKARKTEARG) has biased composition (basic and acidic residues). The helical; Anchor for type IV membrane protein transmembrane segment at 675–695 (VLICMVILLNIGLAILFVHLL) threads the bilayer.

Belongs to the junctophilin family. In terms of assembly, interacts with TRPC3. Interacts with BAG5 and HSPA8; the interaction with HSPA8 is increased in the presence of BAG5. Interacts with MEF2C. In terms of processing, proteolytically cleaved by calpain in response to cardiac stress. The major cleavage site takes place at the C-terminus and leads to the release of the Junctophilin-2 N-terminal fragment chain (JP2NT). Post-translationally, phosphorylation on Ser-165, probably by PKC, affects RYR1-mediated calcium ion release, interaction with TRPC3, and skeletal muscle myotubule development. As to expression, abundantly expressed in skeletal muscle and heart. Weak expression in stomach and lung.

The protein localises to the cell membrane. The protein resides in the sarcoplasmic reticulum membrane. It localises to the endoplasmic reticulum membrane. It is found in the nucleus. Membrane-binding protein that provides a structural bridge between the plasma membrane and the sarcoplasmic reticulum and is required for normal excitation-contraction coupling in cardiomyocytes. Provides a structural foundation for functional cross-talk between the cell surface and intracellular Ca(2+) release channels by maintaining the 12-15 nm gap between the sarcolemma and the sarcoplasmic reticulum membranes in the cardiac dyads. Necessary for proper intracellular Ca(2+) signaling in cardiac myocytes via its involvement in ryanodine receptor-mediated calcium ion release. Contributes to the construction of skeletal muscle triad junctions. In terms of biological role, transcription repressor required to safeguard against the deleterious effects of cardiac stress. Generated following cleavage of the Junctophilin-2 chain by calpain in response to cardiac stress in cardiomyocytes. Following cleavage and release from the membrane, translocates to the nucleus, binds DNA and represses expression of genes implicated in cell growth and differentiation, hypertrophy, inflammation and fibrosis. Modifies the transcription profile and thereby attenuates pathological remodeling in response to cardiac stress. Probably acts by competing with MEF2 transcription factors and TATA-binding proteins. The chain is Junctophilin-2 from Mus musculus (Mouse).